The following is a 647-amino-acid chain: Frizzled-1 (647 aa).

The signal sequence occupies residues 1 to 69; it reads MAEEEAPKKS…WLLEAPLLLG (69 aa). The Extracellular portion of the chain corresponds to 73–322; it reads QAAGQGPGQG…PEELRFSRTW (250 aa). Residues 74 to 104 are disordered; the sequence is AAGQGPGQGPGPGQQPPPPPQQQQSGQQYNG. The 120-residue stretch at 111–230 folds into the FZ domain; it reads PDHGYCQPIS…HGAGELCVGQ (120 aa). 5 cysteine pairs are disulfide-bonded: Cys-116/Cys-177, Cys-124/Cys-170, Cys-161/Cys-198, Cys-187/Cys-227, and Cys-191/Cys-215. Asn-130 carries N-linked (GlcNAc...) asparagine glycosylation. Residue Asn-231 is glycosylated (N-linked (GlcNAc...) asparagine). The helical transmembrane segment at 323 to 343 threads the bilayer; that stretch reads IGIWSVLCCASTLFTVLTYLV. The Cytoplasmic segment spans residues 344 to 354; sequence DMRRFSYPERP. The helical transmembrane segment at 355–375 threads the bilayer; that stretch reads IIFLSGCYTAVAVAYIAGFLL. Residues 376-402 lie on the Extracellular side of the membrane; the sequence is EDRVVCNDKFAEDGARTVAQGTKKEGC. A helical membrane pass occupies residues 403–423; that stretch reads TILFMMLYFFSMASSIWWVIL. The Cytoplasmic segment spans residues 424–445; it reads SLTWFLAAGMKWGHEAIEANSQ. A helical membrane pass occupies residues 446–466; that stretch reads YFHLAAWAVPAIKTITILALG. Residues 467–489 lie on the Extracellular side of the membrane; it reads QVDGDVLSGVCFVGLNNVDALRG. The chain crosses the membrane as a helical span at residues 490–510; it reads FVLAPLFVYLFIGTSFLLAGF. Topologically, residues 511–536 are cytoplasmic; it reads VSLFRIRTIMKHDGTKTEKLEKLMVR. Residues 537–557 form a helical membrane-spanning segment; it reads IGVFSVLYTVPATIVIACYFY. Over 558 to 601 the chain is Extracellular; it reads EQAFRDQWERSWVAQSCKSYAIPCPHLQAGGGAPPHPPMSPDFT. A helical membrane pass occupies residues 602–622; that stretch reads VFMIKYLMTLIVGITSGFWIW. Over 623–647 the chain is Cytoplasmic; it reads SGKTLNSWRKFYTRLTNSKQGETTV. The Lys-Thr-X-X-X-Trp motif, mediates interaction with the PDZ domain of Dvl family members signature appears at 625-630; that stretch reads KTLNSW. Positions 645-647 match the PDZ-binding motif; sequence TTV.

This sequence belongs to the G-protein coupled receptor Fz/Smo family. In terms of assembly, interacts with MYOC. Interacts with WNT7B. As to quaternary structure, (Microbial infection) Interacts with C.difficile toxin TcdB; frizzled receptors constitute the major host receptors for TcdB in the colonic epithelium. In terms of processing, ubiquitinated by ZNRF3, leading to its degradation by the proteasome. In terms of tissue distribution, expressed in adult heart, placenta, lung, kidney, pancreas, prostate, and ovary and in fetal lung and kidney.

The protein localises to the cell membrane. Its function is as follows. Receptor for Wnt proteins. Activated by WNT3A, WNT3, WNT1 and to a lesser extent WNT2, but apparently not by WNT4, WNT5A, WNT5B, WNT6, WNT7A or WNT7B. Contradictory results showing activation by WNT7B have been described for mouse. Functions in the canonical Wnt/beta-catenin signaling pathway. The canonical Wnt/beta-catenin signaling pathway leads to the activation of disheveled proteins, inhibition of GSK-3 kinase, nuclear accumulation of beta-catenin and activation of Wnt target genes. A second signaling pathway involving PKC and calcium fluxes has been seen for some family members, but it is not yet clear if it represents a distinct pathway or if it can be integrated in the canonical pathway, as PKC seems to be required for Wnt-mediated inactivation of GSK-3 kinase. Both pathways seem to involve interactions with G-proteins. May be involved in transduction and intercellular transmission of polarity information during tissue morphogenesis and/or in differentiated tissues. (Microbial infection) Acts as a receptor for C.difficile toxin TcdB in the colonic epithelium. The sequence is that of Frizzled-1 (FZD1) from Homo sapiens (Human).